The following is a 568-amino-acid chain: Phosphomethylpyrimidine synthase (568 aa).

Substrate is bound by residues Asn188, Met217, Tyr246, His282, 302-304 (SRG), 343-346 (DGLR), and Glu382. Zn(2+) is bound at residue His386. Tyr409 lines the substrate pocket. His450 contacts Zn(2+). The [4Fe-4S] cluster site is built by Cys530, Cys533, and Cys538.

The protein belongs to the ThiC family. In terms of assembly, homodimer. The cofactor is [4Fe-4S] cluster.

It carries out the reaction 5-amino-1-(5-phospho-beta-D-ribosyl)imidazole + S-adenosyl-L-methionine = 4-amino-2-methyl-5-(phosphooxymethyl)pyrimidine + CO + 5'-deoxyadenosine + formate + L-methionine + 3 H(+). Its pathway is cofactor biosynthesis; thiamine diphosphate biosynthesis. Its function is as follows. Catalyzes the synthesis of the hydroxymethylpyrimidine phosphate (HMP-P) moiety of thiamine from aminoimidazole ribotide (AIR) in a radical S-adenosyl-L-methionine (SAM)-dependent reaction. The chain is Phosphomethylpyrimidine synthase from Idiomarina loihiensis (strain ATCC BAA-735 / DSM 15497 / L2-TR).